Reading from the N-terminus, the 233-residue chain is 7-cyano-7-deazaguanine synthase (233 aa).

Position 11–21 (11–21 (LSGGLDSSTVL)) interacts with ATP. Zn(2+)-binding residues include Cys-195, Cys-203, Cys-206, and Cys-209.

Belongs to the QueC family. Requires Zn(2+) as cofactor.

It catalyses the reaction 7-carboxy-7-deazaguanine + NH4(+) + ATP = 7-cyano-7-deazaguanine + ADP + phosphate + H2O + H(+). Its pathway is purine metabolism; 7-cyano-7-deazaguanine biosynthesis. Catalyzes the ATP-dependent conversion of 7-carboxy-7-deazaguanine (CDG) to 7-cyano-7-deazaguanine (preQ(0)). The protein is 7-cyano-7-deazaguanine synthase of Thermosynechococcus vestitus (strain NIES-2133 / IAM M-273 / BP-1).